The sequence spans 592 residues: PiggyBac transposable element-derived protein 2 (592 aa).

The disordered stretch occupies residues E31 to H69.

In Homo sapiens (Human), this protein is PiggyBac transposable element-derived protein 2 (PGBD2).